A 184-amino-acid polypeptide reads, in one-letter code: MNHLRTAVLYTIISAVFLGLGYPLIMTGLAQWIFPRQANGSLIVRNGQVIGSKLIGQTFSGAGYFHSRPSAAGNGYDAESSGGSNLAPTNHALIQQVEQRAAAEQVGATKVPVDLVTASASGLDPDITPAAAYYQAPRIAKARHLPLAAVRKLIAEQTTARQFGLLGEPRVNVLAINLKLDQMH.

Residues 6-26 (TAVLYTIISAVFLGLGYPLIM) form a helical membrane-spanning segment.

It belongs to the KdpC family. In terms of assembly, the system is composed of three essential subunits: KdpA, KdpB and KdpC.

The protein resides in the cell inner membrane. Functionally, part of the high-affinity ATP-driven potassium transport (or Kdp) system, which catalyzes the hydrolysis of ATP coupled with the electrogenic transport of potassium into the cytoplasm. This subunit acts as a catalytic chaperone that increases the ATP-binding affinity of the ATP-hydrolyzing subunit KdpB by the formation of a transient KdpB/KdpC/ATP ternary complex. The chain is Potassium-transporting ATPase KdpC subunit from Acidobacterium capsulatum (strain ATCC 51196 / DSM 11244 / BCRC 80197 / JCM 7670 / NBRC 15755 / NCIMB 13165 / 161).